A 908-amino-acid polypeptide reads, in one-letter code: Protein translocase subunit SecA (908 aa).

Residues Gln-87, 105-109 (GEGKT), and Asp-513 contribute to the ATP site. The segment covering 852-863 (ARRAQAQHATAE) has biased composition (low complexity). The interval 852–908 (ARRAQAQHATAENQLADDEAEAASPQTVVRDERKVGRNEPCPCGSGKKYKQCHGKID) is disordered. Zn(2+) is bound by residues Cys-892, Cys-894, Cys-903, and His-904. A compositionally biased stretch (basic residues) spans 898–908 (KKYKQCHGKID).

This sequence belongs to the SecA family. In terms of assembly, monomer and homodimer. Part of the essential Sec protein translocation apparatus which comprises SecA, SecYEG and auxiliary proteins SecDF-YajC and YidC. Zn(2+) serves as cofactor.

It localises to the cell inner membrane. The protein localises to the cytoplasm. The catalysed reaction is ATP + H2O + cellular proteinSide 1 = ADP + phosphate + cellular proteinSide 2.. Its function is as follows. Part of the Sec protein translocase complex. Interacts with the SecYEG preprotein conducting channel. Has a central role in coupling the hydrolysis of ATP to the transfer of proteins into and across the cell membrane, serving both as a receptor for the preprotein-SecB complex and as an ATP-driven molecular motor driving the stepwise translocation of polypeptide chains across the membrane. The polypeptide is Protein translocase subunit SecA (Vibrio atlanticus (strain LGP32) (Vibrio splendidus (strain Mel32))).